The sequence spans 995 residues: Zinc finger protein ZFPM1 (995 aa).

Basic residues predominate over residues 1–14 (MSRRKQSNPRQIKR). The tract at residues 1–103 (MSRRKQSNPR…EAAMASPWSG (103 aa)) is disordered. Basic and acidic residues predominate over residues 15 to 36 (SLRDMEAGEEAKAMDSSPKEQE). Acidic residues-rich tracts occupy residues 67 to 78 (SPEDPEDMEGQE) and 86 to 95 (EEKEEKEEEA). 2 positions are modified to phosphoserine: S99 and S143. The segment at 249–282 (VINKDVFPCKDCGIWYRSERNLQAHLLYYCASRQ) adopts a CCHC FOG-type 1 zinc-finger fold. C257, C260, H273, and C278 together coordinate Zn(2+). S286 is modified (phosphoserine). C2H2-type zinc fingers lie at residues 303–327 (RVCPFPQCRKSCPSASSLEIHMRSH), 333–355 (FVCLICLSAFTTKANCERHLKVH), and 361–384 (GVCHNCGFISTTRDILYSHLVTNH). The segment at 343–354 (TTKANCERHLKV) is interaction with TACC3. Residues S397, S497, and S500 each carry the phosphoserine modification. Residues 424–526 (PLVPADKAPT…SSPGPGELTM (103 aa)) form a disordered region. Over residues 509–525 (ELSSPTPGSSPGPGELT) the composition is skewed to low complexity. The segment at 584-617 (FSGTKGATCFECEITFNNINNFYVHKRLYCSGRR) adopts a CCHC FOG-type 2 zinc-finger fold. Positions 592, 595, 608, and 613 each coordinate Zn(2+). Residues 616-694 (RRAPEDPPTV…SVDDAEDDPS (79 aa)) form a disordered region. The segment covering 630-652 (AATGPARAPAGAAAEPDPSRSSP) has biased composition (low complexity). S651 and S684 each carry phosphoserine. The CCHC FOG-type 3 zinc finger occupies 690–723 (EDDPSRTLCEACNIRFSRHETYTVHKRYYCASRH). The Zn(2+) site is built by C698, C701, H714, and C719. Residues 721 to 827 (SRHDPPPRRP…PRRQSPDAPT (107 aa)) are disordered. 2 stretches are compositionally biased toward pro residues: residues 728-740 (RRPPAPTTAPGPA) and 764-779 (GAPPPAAGPAPVPVVP). Residues 785–800 (LPSSPRPGSASAGPAP) are compositionally biased toward low complexity. Position 803 is a phosphoserine (S803). The interval 811 to 817 (PIDLSKR) is interaction with CTBP2. S822 carries the phosphoserine modification. The segment at 830-863 (PALADYHECTACRVSFHSLEAYLAHKKYSCPAAP) adopts a CCHC FOG-type 4 zinc-finger fold. Residues C838, C841, H854, and C859 each contribute to the Zn(2+) site. The segment at 868 to 891 (ALCPYCPPNGRVRGDLVEHLRQAH) adopts a C2H2-type 4 zinc-finger fold. Residues 892–960 (GLQVAKPAAS…APAPAPGGGG (69 aa)) are disordered. Over residues 908 to 922 (TPAERAPRDSPDGRA) the composition is skewed to basic and acidic residues. Phosphoserine is present on residues S925 and S927. The segment at 957 to 990 (GGGGGHRYCRLCNIRFSSLSTFIAHKKYYCSSHA) adopts a CCHC FOG-type 5 zinc-finger fold. Zn(2+) contacts are provided by C965, C968, H981, and C986.

The protein belongs to the FOG (Friend of GATA) family. Interacts with the N-terminal zinc-finger of GATA1, GATA2 and GATA3. Interacts with corepressor CTBP2; this interaction is however not essential for corepressor activity in erythropoiesis. Interacts with TACC3. Mainly expressed in hematopoietic tissues. Expressed in the spleen, a primary site of hematopoiesis in the adult mouse, as well as in the liver and testis, but not in the heart, brain, lung, kidney, or skeletal muscle. Among hematopoietic cell lines, it is strongly expressed in erythroid and megakaryocytic cell lines. Expressed at low level in several lymphoid and early myeloid cell lines. Not expressed in mast cell and macrophage lines. Expressed in the heart, where it colocalizes with GATA4, GATA5 and GATA6.

Its subcellular location is the nucleus. In terms of biological role, transcription regulator that plays an essential role in erythroid and megakaryocytic cell differentiation. Essential cofactor that acts via the formation of a heterodimer with transcription factors of the GATA family GATA1, GATA2 and GATA3. Such heterodimer can both activate or repress transcriptional activity, depending on the cell and promoter context. The heterodimer formed with GATA proteins is essential to activate expression of genes such as NFE2, ITGA2B, alpha- and beta-globin, while it represses expression of KLF1. May be involved in regulation of some genes in gonads. May also be involved in cardiac development, in a non-redundant way with ZFPM2/FOG2. In Mus musculus (Mouse), this protein is Zinc finger protein ZFPM1 (Zfpm1).